We begin with the raw amino-acid sequence, 66 residues long: Large ribosomal subunit protein bL35 (66 aa).

The protein belongs to the bacterial ribosomal protein bL35 family.

In Phenylobacterium zucineum (strain HLK1), this protein is Large ribosomal subunit protein bL35.